The sequence spans 509 residues: Ceramide glucosyltransferase (509 aa).

At 1–42 (MIMQLGLTSLAFLALKCDAYNIAPKIDTPNVEPFAPSGGLKL) the chain is on the lumenal side. A helical transmembrane segment spans residues 43–63 (LAIVAIIWYVVVLLVAYYGFF). Residues 64–384 (EIMQKFSKRK…EATLLEPTTE (321 aa)) are Cytoplasmic-facing. Asp123 is a short sequence motif (D1). Asp179 is a short sequence motif (D2). Residue Asp321 is a short sequence motif, D3. Asp321 serves as the catalytic Proton acceptor. The short motif at 361-365 (RRIRW) is the (Q/R)XXRW element. Residues 385-405 (CLLCGTFGTFAISTLFLQSYF) traverse the membrane as a helical segment. Residues 406–408 (NWK) are Lumenal-facing. Residues 409-429 (FFIFHLLVWMVTDYTQFHILL) traverse the membrane as a helical segment. The Cytoplasmic portion of the chain corresponds to 430-466 (TNASQDTATCNVPYFAEPNFNAYGSPFESSNLRTFHR). A helical transmembrane segment spans residues 467–487 (WVLYWLLREVLALPIWISAML). The Lumenal portion of the chain corresponds to 488 to 509 (GTRIIWRNRPFRINVDLSAEEL).

It belongs to the glycosyltransferase 2 family.

The protein resides in the golgi apparatus membrane. It carries out the reaction an N-acylsphing-4-enine + UDP-alpha-D-glucose = a beta-D-glucosyl-(1&lt;-&gt;1')-N-acylsphing-4-enine + UDP + H(+). It participates in lipid metabolism; sphingolipid metabolism. Functionally, catalyzes the final step in the biosynthesis of the membrane lipid glucosylceramide (GluCer), the transfer of glucose to ceramide. Glucosylceramides play important roles in growth, differentiation and pathogenicity. The sequence is that of Ceramide glucosyltransferase from Komagataella phaffii (strain GS115 / ATCC 20864) (Yeast).